A 716-amino-acid chain; its full sequence is Beta-galactosidase (716 aa).

The active-site Proton donor is the Glu-389. The active-site Nucleophile is the Glu-462.

It belongs to the glycosyl hydrolase 2 family. In terms of assembly, homodimer.

The enzyme catalyses Hydrolysis of terminal non-reducing beta-D-galactose residues in beta-D-galactosides.. Functionally, displays beta-galactosidase activity with the artificial chromogenic substrate o-nitrophenyl-beta-D-galactopyranoside (ONPG). The polypeptide is Beta-galactosidase (Thermoanaerobacterium thermosulfurigenes (Clostridium thermosulfurogenes)).